The following is a 148-amino-acid chain: Large ribosomal subunit protein uL15 (148 aa).

The segment at 1–61 is disordered; that stretch reads MELNNLKPAI…GGQMPMQRRL (61 aa). Over residues 30–39 the composition is skewed to basic residues; sequence TATKGHKGQK.

This sequence belongs to the universal ribosomal protein uL15 family. As to quaternary structure, part of the 50S ribosomal subunit.

In terms of biological role, binds to the 23S rRNA. The sequence is that of Large ribosomal subunit protein uL15 from Geobacter metallireducens (strain ATCC 53774 / DSM 7210 / GS-15).